We begin with the raw amino-acid sequence, 122 residues long: Heat-labile enterotoxin IIB, B chain (122 aa).

A signal peptide spans 1–23 (MSFKKIIKAFVIMAALVSVQAHA). A disulfide bridge links Cys-33 with Cys-104.

Heterohexamer of one A chain and of five B chains.

The biological activity of the toxin is produced by the A chain, which activates intracellular adenyl cyclase. In Escherichia coli, this protein is Heat-labile enterotoxin IIB, B chain.